A 306-amino-acid polypeptide reads, in one-letter code: NAD kinase 1 (306 aa).

The Proton acceptor role is filled by D67. NAD(+)-binding positions include D67 to G68, N149 to D150, and D181.

This sequence belongs to the NAD kinase family. A divalent metal cation is required as a cofactor.

It localises to the cytoplasm. The catalysed reaction is NAD(+) + ATP = ADP + NADP(+) + H(+). In terms of biological role, involved in the regulation of the intracellular balance of NAD and NADP, and is a key enzyme in the biosynthesis of NADP. Catalyzes specifically the phosphorylation on 2'-hydroxyl of the adenosine moiety of NAD to yield NADP. In Synechococcus sp. (strain ATCC 27144 / PCC 6301 / SAUG 1402/1) (Anacystis nidulans), this protein is NAD kinase 1.